We begin with the raw amino-acid sequence, 263 residues long: Pollen allergen Lol p 1 (263 aa).

A signal peptide spans 1-23 (MASSSSVLLVVALFAVFLGSAHG). A glycan (N-linked (GlcNAc...) asparagine) is linked at Asn-32. Positions 61 to 167 (GGACGYKNVD…RRVKCKYPDD (107 aa)) constitute an Expansin-like EG45 domain. The Expansin-like CBD domain maps to 181-262 (NYLAILVKYV…GWKADTSYSA (82 aa)).

The protein belongs to the expansin family. Expansin B subfamily.

Its subcellular location is the secreted. This Lolium perenne (Perennial ryegrass) protein is Pollen allergen Lol p 1.